A 386-amino-acid chain; its full sequence is Phosphate acyltransferase (386 aa).

A disordered region spans residues 359–386; that stretch reads PHRARQDELGENKVVGADQSMTAKATGT. Over residues 377–386 the composition is skewed to polar residues; sequence QSMTAKATGT.

The protein belongs to the PlsX family. As to quaternary structure, homodimer. Probably interacts with PlsY.

The protein localises to the cytoplasm. It catalyses the reaction a fatty acyl-[ACP] + phosphate = an acyl phosphate + holo-[ACP]. The protein operates within lipid metabolism; phospholipid metabolism. Its function is as follows. Catalyzes the reversible formation of acyl-phosphate (acyl-PO(4)) from acyl-[acyl-carrier-protein] (acyl-ACP). This enzyme utilizes acyl-ACP as fatty acyl donor, but not acyl-CoA. This Beijerinckia indica subsp. indica (strain ATCC 9039 / DSM 1715 / NCIMB 8712) protein is Phosphate acyltransferase.